Consider the following 240-residue polypeptide: Sec-independent protein translocase protein TatC (240 aa).

The next 6 membrane-spanning stretches (helical) occupy residues 15 to 35 (IISIIAFLIGSGIAFYFAKYV), 61 to 81 (LFILIKISLAVGFIIASPVIL), 103 to 123 (LLLGSILLFMLGALFAYFIVL), 152 to 172 (FVLKLVVAFGIAFEMPIVLYV), 191 to 211 (FIVIAFVIGAIIAPDVSTQVL), and 212 to 232 (MAIPLLLLYEISIFLGKLATR).

It belongs to the TatC family. In terms of assembly, forms a complex with TatA.

The protein resides in the cell inner membrane. Functionally, part of the twin-arginine translocation (Tat) system that transports large folded proteins containing a characteristic twin-arginine motif in their signal peptide across membranes. In Aquifex aeolicus (strain VF5), this protein is Sec-independent protein translocase protein TatC.